We begin with the raw amino-acid sequence, 147 residues long: Large ribosomal subunit protein uL11 (147 aa).

It belongs to the universal ribosomal protein uL11 family. In terms of assembly, part of the ribosomal stalk of the 50S ribosomal subunit. Interacts with L10 and the large rRNA to form the base of the stalk. L10 forms an elongated spine to which L12 dimers bind in a sequential fashion forming a multimeric L10(L12)X complex. One or more lysine residues are methylated.

Its function is as follows. Forms part of the ribosomal stalk which helps the ribosome interact with GTP-bound translation factors. The chain is Large ribosomal subunit protein uL11 from Parabacteroides distasonis (strain ATCC 8503 / DSM 20701 / CIP 104284 / JCM 5825 / NCTC 11152).